A 266-amino-acid polypeptide reads, in one-letter code: F-actin-capping protein subunit beta (266 aa).

The protein belongs to the F-actin-capping protein beta subunit family. In terms of assembly, component of the F-actin capping complex, composed of a heterodimer of an alpha and a beta subunit.

Its subcellular location is the cytoplasm. The protein resides in the cytoskeleton. The protein localises to the actin patch. Its function is as follows. F-actin-capping proteins bind in a Ca(2+)-independent manner to the fast growing ends of actin filaments (barbed end) thereby blocking the exchange of subunits at these ends. Unlike other capping proteins (such as gelsolin and severin), these proteins do not sever actin filaments. The chain is F-actin-capping protein subunit beta (cap2) from Emericella nidulans (strain FGSC A4 / ATCC 38163 / CBS 112.46 / NRRL 194 / M139) (Aspergillus nidulans).